Here is a 188-residue protein sequence, read N- to C-terminus: Photosystem I assembly protein Ycf4 (188 aa).

2 consecutive transmembrane segments (helical) span residues I26 to S46 and L70 to L90.

The protein belongs to the Ycf4 family.

It localises to the cellular thylakoid membrane. In terms of biological role, seems to be required for the assembly of the photosystem I complex. This is Photosystem I assembly protein Ycf4 from Rippkaea orientalis (strain PCC 8801 / RF-1) (Cyanothece sp. (strain PCC 8801)).